Consider the following 806-residue polypeptide: Putative phage-related protein YobO (806 aa).

The interval M1 to S23 is disordered. A compositionally biased stretch (polar residues) spans L12–E21. 6 PbH1 repeats span residues V199–S221, S237–Y259, S260–D292, S294–A315, S419–L441, and T448–G470.

The sequence is that of Putative phage-related protein YobO (yobO) from Bacillus subtilis (strain 168).